The primary structure comprises 459 residues: Putrescine aminotransferase (459 aa).

Residues Gly-150–Thr-151 and Gln-274 contribute to the pyridoxal 5'-phosphate site. Lys-300 is modified (N6-(pyridoxal phosphate)lysine). Pyridoxal 5'-phosphate is bound at residue Thr-332.

The protein belongs to the class-III pyridoxal-phosphate-dependent aminotransferase family. Putrescine aminotransferase subfamily. Requires pyridoxal 5'-phosphate as cofactor.

It catalyses the reaction an alkane-alpha,omega-diamine + 2-oxoglutarate = an omega-aminoaldehyde + L-glutamate. The enzyme catalyses putrescine + 2-oxoglutarate = 1-pyrroline + L-glutamate + H2O. The catalysed reaction is cadaverine + 2-oxoglutarate = 5-aminopentanal + L-glutamate. It participates in amine and polyamine degradation; putrescine degradation; 4-aminobutanal from putrescine (transaminase route): step 1/1. Catalyzes the aminotransferase reaction from putrescine to 2-oxoglutarate, leading to glutamate and 4-aminobutanal, which spontaneously cyclizes to form 1-pyrroline. This is the first step in one of two pathways for putrescine degradation, where putrescine is converted into 4-aminobutanoate (gamma-aminobutyrate or GABA) via 4-aminobutanal. Also functions as a cadaverine transaminase in a a L-lysine degradation pathway to succinate that proceeds via cadaverine, glutarate and L-2-hydroxyglutarate. This is Putrescine aminotransferase from Salmonella heidelberg (strain SL476).